Reading from the N-terminus, the 361-residue chain is MRVDLFDFELPEERIALRPAEPRDSAKMLVVKSGEALDDRKVGDLPSLLRAGDVLVFNDTKVIPAQLKGIRRRGEAQAQVEATLHMRVAPDRWLAFMRPGKRIAAGDRIHFGHDGNSCFLGQLDATVIEKGEGGEALLGFDLSGPFLDEALHAVGHIPLPPYIASKRDDDERDRADYQTIYAREEGAVAAPTAGLHFTPELFAALDAKGVERHFVTLHVGAGTFLPVKADDTADHKMHAEIGSVSRETADALNAAKARGGRIIAVGTTSLRLLESAAREDGTVPAWSGPTDIFITPGYRFRTADMLMTNFHLPRSTLFMLVSAFSGLDTMGAAYAHAIANRYRFYSYGDASLLYRAEMSDG.

The protein belongs to the QueA family. In terms of assembly, monomer.

The protein localises to the cytoplasm. It catalyses the reaction 7-aminomethyl-7-carbaguanosine(34) in tRNA + S-adenosyl-L-methionine = epoxyqueuosine(34) in tRNA + adenine + L-methionine + 2 H(+). The protein operates within tRNA modification; tRNA-queuosine biosynthesis. Its function is as follows. Transfers and isomerizes the ribose moiety from AdoMet to the 7-aminomethyl group of 7-deazaguanine (preQ1-tRNA) to give epoxyqueuosine (oQ-tRNA). In Mesorhizobium japonicum (strain LMG 29417 / CECT 9101 / MAFF 303099) (Mesorhizobium loti (strain MAFF 303099)), this protein is S-adenosylmethionine:tRNA ribosyltransferase-isomerase.